The primary structure comprises 419 residues: Gamma-glutamyl phosphate reductase (419 aa).

Belongs to the gamma-glutamyl phosphate reductase family.

The protein resides in the cytoplasm. It carries out the reaction L-glutamate 5-semialdehyde + phosphate + NADP(+) = L-glutamyl 5-phosphate + NADPH + H(+). It participates in amino-acid biosynthesis; L-proline biosynthesis; L-glutamate 5-semialdehyde from L-glutamate: step 2/2. Catalyzes the NADPH-dependent reduction of L-glutamate 5-phosphate into L-glutamate 5-semialdehyde and phosphate. The product spontaneously undergoes cyclization to form 1-pyrroline-5-carboxylate. In Bordetella parapertussis (strain 12822 / ATCC BAA-587 / NCTC 13253), this protein is Gamma-glutamyl phosphate reductase.